The following is a 113-amino-acid chain: Na(+)/H(+) antiporter subunit C1 (113 aa).

3 helical membrane passes run 1–21, 28–48, and 72–92; these read MEII…YLVL, IVMG…TMGG, and LILT…VLAF.

It belongs to the CPA3 antiporters (TC 2.A.63) subunit C family. As to quaternary structure, may form a heterooligomeric complex that consists of seven subunits: mnhA1, mnhB1, mnhC1, mnhD1, mnhE1, mnhF1 and mnhG1.

The protein localises to the cell membrane. Mnh complex is a Na(+)/H(+) antiporter involved in Na(+) excretion. The sequence is that of Na(+)/H(+) antiporter subunit C1 (mnhC1) from Staphylococcus haemolyticus (strain JCSC1435).